A 2656-amino-acid chain; its full sequence is 1-phosphatidylinositol 3-phosphate 5-kinase (2656 aa).

The segment at 24 to 159 (FGTDDSQKDF…NSTNNDTSSN (136 aa)) is disordered. 2 stretches are compositionally biased toward low complexity: residues 59–107 (NNNN…NNNN) and 124–159 (SNTT…TSSN). The FYVE-type zinc finger occupies 198-255 (DHSSAVCYECSEEFTTFKRRHHCRLCGQIFCWKCSQKTLTDGKGERVRVCNFCYRRYM). Residues Cys-204, Cys-207, Cys-220, Cys-223, Cys-228, Cys-231, Cys-247, and Cys-250 each coordinate Zn(2+). A compositionally biased stretch (polar residues) spans 304 to 331 (NVSLGNSGDNSSFVQSPNNNFSQSPTFS). 12 disordered regions span residues 304-383 (NVSL…NNQQ), 465-495 (DHHQ…SPIV), 517-570 (DNLD…SSSS), 618-657 (NNND…NTSF), 670-823 (TIGR…QQQP), 1115-1150 (SNSI…NNST), 1633-1659 (RSKR…QILI), 1710-1844 (VNNN…SSTP), 2031-2127 (QQQQ…SISP), 2179-2208 (NQQQ…SIIE), 2246-2304 (QQGD…SSNS), and 2617-2656 (NNNN…QINK). A compositionally biased stretch (low complexity) spans 332–355 (QQQQQQQQQQQQQQQQQQQQQQQQ). Polar residues-rich tracts occupy residues 356–371 (TTGV…NSTL), 473–489 (SNSH…TPSG), and 542–557 (SHSS…TVST). 5 stretches are compositionally biased toward low complexity: residues 558 to 570 (GESN…SSSS), 618 to 637 (NNND…NNNN), 674 to 730 (NNNN…NLPN), 743 to 757 (QQQQ…QPQP), and 811 to 823 (PSSS…QQQP). Composition is skewed to low complexity over residues 1639 to 1656 (QQQQ…PQPQ) and 1710 to 1746 (VNNN…NNNN). Coiled coils occupy residues 1741 to 1823 (NNNN…NNNN) and 2019 to 2061 (KRIS…QQEQ). Over residues 1750 to 1798 (NKSENENENKNENKNENENENENKNENKNENENENKKENENQLEIKNEN) the composition is skewed to basic and acidic residues. Composition is skewed to low complexity over residues 1807-1833 (NNNN…IDNN), 2031-2061 (QQQQ…QQEQ), 2078-2107 (SPSS…SETN), and 2118-2127 (LSGSPISISP). Residues 2193 to 2202 (IDEKDDRNTE) show a composition bias toward basic and acidic residues. 2 stretches are compositionally biased toward low complexity: residues 2252-2283 (NNNN…NNNN) and 2618-2647 (NNNN…GNIN). In terms of domain architecture, PIPK spans 2275-2596 (NNNNTNNNNE…RFRDAMWLYF (322 aa)).

Its subcellular location is the endosome membrane. The protein resides in the early endosome membrane. It is found in the cytoplasmic vesicle. The protein localises to the phagosome membrane. It localises to the late endosome membrane. It carries out the reaction a 1,2-diacyl-sn-glycero-3-phospho-(1D-myo-inositol-3-phosphate) + ATP = a 1,2-diacyl-sn-glycero-3-phospho-(1D-myo-inositol-3,5-bisphosphate) + ADP + H(+). The catalysed reaction is a 1,2-diacyl-sn-glycero-3-phospho-(1D-myo-inositol) + ATP = a 1,2-diacyl-sn-glycero-3-phospho-(1D-myo-inositol-5-phosphate) + ADP + H(+). It catalyses the reaction L-seryl-[protein] + ATP = O-phospho-L-seryl-[protein] + ADP + H(+). Functionally, dual specificity kinase part of the PI(3,5)P2 regulatory complex which regulates both the synthesis and turnover of phosphatidylinositol 3,5-bisphosphate (PtdIns(3,5)P2). Catalyzes the phosphorylation of phosphatidylinositol 3-phosphate on the fifth hydroxyl of the myo-inositol ring, to form phosphatidylinositol 3,5-bisphosphate. The sequence is that of 1-phosphatidylinositol 3-phosphate 5-kinase (pip5k3) from Dictyostelium discoideum (Social amoeba).